A 110-amino-acid chain; its full sequence is SOSS complex subunit C (110 aa).

It belongs to the SOSS-C family. In terms of assembly, belongs to the multiprotein complex Integrator. Component of the SOSS complex, composed of soss-b (soss-b1/nabp2 or soss-b2/nabp1), soss-a/ints3 and soss-c/inip.

The protein resides in the nucleus. Component of the SOSS complex, a multiprotein complex that functions downstream of the MRN complex to promote DNA repair and G2/M checkpoint. The SOSS complex associates with single-stranded DNA at DNA lesions and influences diverse endpoints in the cellular DNA damage response including cell-cycle checkpoint activation, recombinational repair and maintenance of genomic stability. Required for efficient homologous recombination-dependent repair of double-strand breaks (DSBs). This is SOSS complex subunit C (inip) from Xenopus laevis (African clawed frog).